The primary structure comprises 146 residues: Hemoglobin subunit beta (146 aa).

A Globin domain is found at 2-146 (HWSAEEKQLI…VAHALARKYH (145 aa)). Heme b is bound by residues His63 and His92.

This sequence belongs to the globin family. As to quaternary structure, heterotetramer of two alpha chains and two beta chains. Red blood cells.

Its function is as follows. Involved in oxygen transport from the lung to the various peripheral tissues. This is Hemoglobin subunit beta (HBB) from Stercorarius maccormicki (South polar skua).